Reading from the N-terminus, the 652-residue chain is DNA ligase (652 aa).

NAD(+) contacts are provided by residues 29–33 (DSDYD), 78–79 (SL), and Glu-107. Lys-109 (N6-AMP-lysine intermediate) is an active-site residue. NAD(+) is bound by residues Arg-130, Glu-164, Lys-278, and Lys-302. Zn(2+)-binding residues include Cys-395, Cys-398, Cys-413, and Cys-418. Residues 577–652 (NSDAALFGLT…IEDEDWLRQL (76 aa)) form the BRCT domain.

The protein belongs to the NAD-dependent DNA ligase family. LigA subfamily. Requires Mg(2+) as cofactor. Mn(2+) is required as a cofactor.

It catalyses the reaction NAD(+) + (deoxyribonucleotide)n-3'-hydroxyl + 5'-phospho-(deoxyribonucleotide)m = (deoxyribonucleotide)n+m + AMP + beta-nicotinamide D-nucleotide.. Functionally, DNA ligase that catalyzes the formation of phosphodiester linkages between 5'-phosphoryl and 3'-hydroxyl groups in double-stranded DNA using NAD as a coenzyme and as the energy source for the reaction. It is essential for DNA replication and repair of damaged DNA. The chain is DNA ligase from Streptococcus pyogenes serotype M4 (strain MGAS10750).